Reading from the N-terminus, the 270-residue chain is Pantoate kinase (270 aa).

This sequence belongs to the GHMP kinase family. PoK subfamily.

The enzyme catalyses (R)-pantoate + ATP = (R)-4-phosphopantoate + ADP + H(+). It participates in cofactor biosynthesis; coenzyme A biosynthesis. In terms of biological role, phosphorylates (R)-pantoate to form (R)-4-phosphopantoate in the CoA biosynthesis pathway. The protein is Pantoate kinase of Methanocaldococcus jannaschii (strain ATCC 43067 / DSM 2661 / JAL-1 / JCM 10045 / NBRC 100440) (Methanococcus jannaschii).